The primary structure comprises 215 residues: Glutathione S-transferase F9 (215 aa).

Residues 2-81 (VLKVYGPHFA…YVAEKYRSQG (80 aa)) enclose the GST N-terminal domain. Residue 11 to 12 (AS) participates in glutathione binding. Serine 12 is subject to Phosphoserine. Methionine sulfoxide is present on methionine 35. Glutathione contacts are provided by residues 39 to 40 (HK), 52 to 53 (TV), and 65 to 66 (ES). The 128-residue stretch at 88 to 215 (TVEDRGQVEQ…ETVAKYSFPA (128 aa)) folds into the GST C-terminal domain. Methionine sulfoxide occurs at positions 118, 123, and 184.

It belongs to the GST superfamily. Phi family. In terms of processing, oxidated at Met-35, Met-118, Met-123 and Met-184 in oxidative stress conditions (e.g. hydrogen peroxide H(2)O(2)).

Its subcellular location is the cytoplasm. It localises to the cytosol. It catalyses the reaction RX + glutathione = an S-substituted glutathione + a halide anion + H(+). With respect to regulation, redox-regulated enzyme; in oxidative stress conditions methionine oxidation ensure a thermodynamic and structural compensatory mechanism to guarantee H(2)O(2) peroxidase activity despite transferase activity inhibition. In terms of biological role, in vitro, possesses glutathione S-transferase activity toward 1-chloro-2,4-dinitrobenzene (CDNB) and benzyl isothiocyanate (BITC), and glutathione peroxidase activity toward cumene hydroperoxide and linoleic acid-13-hydroperoxide. May be involved in the conjugation of reduced glutathione to a wide number of exogenous and endogenous hydrophobic electrophiles and have a detoxification role against certain herbicides. The polypeptide is Glutathione S-transferase F9 (Arabidopsis thaliana (Mouse-ear cress)).